The primary structure comprises 709 residues: Protein SOSEKI 3 (709 aa).

The DIX-like oligomerization domain stretch occupies residues 8-101 (SSVQVLYQLS…YVLRASELFD (94 aa)). 5 disordered regions span residues 242 to 266 (LHTP…AKRM), 315 to 344 (RDGR…AEQS), 358 to 393 (GGSS…KTPC), 411 to 439 (PSPA…NRPS), and 506 to 560 (DSPT…DTKP). Basic and acidic residues predominate over residues 329 to 342 (ELREVQNEKEKEAE). Residues 417 to 436 (NKAHSSLDRQEIPPQEECKN) are compositionally biased toward basic and acidic residues. Residues 529 to 544 (VKTSNSLPRVKTTTSP) show a composition bias toward polar residues. The C2HC/C3H-type zinc finger occupies 663–692 (ILQECSTCGRTFKPDSLQVHMRGCHPPQYA). The Zn(2+) site is built by cysteine 667, cysteine 670, histidine 682, and cysteine 686.

The protein belongs to the SOSEKI family. Homodimer. Forms long polymer filaments with other SOKs proteins polymers crucial for polar localization and biological activity. It depends on Zn(2+) as a cofactor.

The protein resides in the cell membrane. Functionally, SOSEKI proteins locally interpret global polarity cues and can influence cell division orientation to coordinate cell polarization relative to body axes. The polypeptide is Protein SOSEKI 3 (Physcomitrium patens (Spreading-leaved earth moss)).